A 557-amino-acid polypeptide reads, in one-letter code: MSDIQIAQANEATEMKSITAIAEQIGLQATDIEQYGPYKAKLNFQAINRLKEKEDGKLVLVTSINPTPAGEGKSTVTVGLGDALRQLDQSAVIALREPSLGPVMGMKGGATGGGYAQVVPMADINLHFTGDMHALTATVNTLAALIDNHLQQGNVLNIDPRRIIWKRALDINDRALRQVVIGLGGPVQGMPRQDGFDITVASELMAILCLATDITDLKNRISKIVIGYNYDREPVTVGDLEVTGAIAMLLKDALKPNMVQTLEHTPALVHGGPFANIAHGCNSILATQTALKLGDIAITEAGFGADLGAEKFLDIKVPQLGKTPDTIVIVATIRALKYNGGVALADLTTENLDALKAGFSNLAKHIANMQRYGVPVVVSVNEFTSDTAAEVQLLQDLCQAMKVTAVPTSVWANGGQGGIELAKAVLAALQQPKAFKPLYDPQADIKSKLTTVVTEIYGGRDVVFEGKAINQLKQIEKNGWAHLPVCIAKTQYSLSDDPKALGAPSDFTIHVRELIPKLGAGFIVAMTGAVLTMPGLPKKPAALNMDVTADGQISGLF.

67-74 (TPAGEGKS) contacts ATP.

This sequence belongs to the formate--tetrahydrofolate ligase family.

It catalyses the reaction (6S)-5,6,7,8-tetrahydrofolate + formate + ATP = (6R)-10-formyltetrahydrofolate + ADP + phosphate. It participates in one-carbon metabolism; tetrahydrofolate interconversion. The polypeptide is Formate--tetrahydrofolate ligase (Latilactobacillus sakei subsp. sakei (strain 23K) (Lactobacillus sakei subsp. sakei)).